A 610-amino-acid polypeptide reads, in one-letter code: Calcium-dependent protein kinase 1 (610 aa).

Gly-2 is lipidated: N-myristoyl glycine. A lipid anchor (S-palmitoyl cysteine) is attached at Cys-5. The segment at 17 to 133 (VSAAMWRPRD…HMKRVSSAGL (117 aa)) is disordered. Basic and acidic residues-rich tracts occupy residues 47–56 (LRSRLSDEVQ) and 70–117 (TDVE…DPPA). A compositionally biased stretch (basic residues) spans 118 to 127 (KPKKPKHMKR). In terms of domain architecture, Protein kinase spans 150–408 (YSLGRKLGQG…AHQVLCHPWV (259 aa)). ATP is bound by residues 156–164 (LGQGQFGTT) and Lys-179. The active-site Proton acceptor is the Asp-274. Position 314 is a phosphoserine (Ser-314). An autoinhibitory domain region spans residues 414–444 (APDKPLDSAVLSRMKQFSAMNKFKKMALRVI). EF-hand domains follow at residues 451-486 (EEIAGLKEMFNMIDADKSGQITFEELKAGLKRVGAN), 487-522 (LKESEILDLMQAADVDNSGTIDYKEFIAATLHLNKI), 523-558 (EREDHLFAAFTYFDKDGSGYITPDELQQACEEFGVE), and 559-592 (DVRIEELMRDVDQDNDGRIDYNEFVAMMQKGSIT). Asp-464, Asp-466, Ser-468, Gln-470, Glu-475, Asp-500, Asp-502, Ser-504, Thr-506, Glu-511, Asp-536, Asp-538, Ser-540, Tyr-542, Glu-547, Asp-570, Asp-572, Asp-574, Arg-576, and Glu-581 together coordinate Ca(2+).

It belongs to the protein kinase superfamily. Ser/Thr protein kinase family. CDPK subfamily. As to quaternary structure, interacts with 14-3-3 proteins.

The protein resides in the peroxisome membrane. It catalyses the reaction L-seryl-[protein] + ATP = O-phospho-L-seryl-[protein] + ADP + H(+). It carries out the reaction L-threonyl-[protein] + ATP = O-phospho-L-threonyl-[protein] + ADP + H(+). Its activity is regulated as follows. Activated by calcium. Autophosphorylation may play an important role in the regulation of the kinase activity. May play a role in signal transduction pathways that involve calcium as a second messenger. Phosphorylates the Ca(2+)-ATPase ACA2 resulting in the inhibition of its calcium activation. This chain is Calcium-dependent protein kinase 1 (CPK1), found in Arabidopsis thaliana (Mouse-ear cress).